We begin with the raw amino-acid sequence, 109 residues long: Thiosulfate sulfurtransferase GlpE (109 aa).

The 89-residue stretch at 16-104 (REQGAVVVDI…WRTTYPAEIS (89 aa)) folds into the Rhodanese domain. Cys64 serves as the catalytic Cysteine persulfide intermediate.

Belongs to the GlpE family.

The protein localises to the cytoplasm. It catalyses the reaction thiosulfate + hydrogen cyanide = thiocyanate + sulfite + 2 H(+). The enzyme catalyses thiosulfate + [thioredoxin]-dithiol = [thioredoxin]-disulfide + hydrogen sulfide + sulfite + 2 H(+). Its function is as follows. Transferase that catalyzes the transfer of sulfur from thiosulfate to thiophilic acceptors such as cyanide or dithiols. May function in a CysM-independent thiosulfate assimilation pathway by catalyzing the conversion of thiosulfate to sulfite, which can then be used for L-cysteine biosynthesis. The chain is Thiosulfate sulfurtransferase GlpE from Pseudomonas fluorescens (strain SBW25).